Here is a 227-residue protein sequence, read N- to C-terminus: Probable N-acetyltransferase family 8 member 5 (227 aa).

A run of 3 helical transmembrane segments spans residues 29–49 (IPAAFRYTLLLPQTLLFLFVM), 53–73 (IVLVFGSWLLAVICIFFLLLL), and 201–221 (ISIIKWLITFSIIHFTYSFPS). The N-acetyltransferase domain maps to 69 to 213 (FLLLLLRLLA…IKWLITFSII (145 aa)).

Belongs to the camello family.

It is found in the membrane. In terms of biological role, may play a role in regulation of gastrulation. This Mus musculus (Mouse) protein is Probable N-acetyltransferase family 8 member 5.